The sequence spans 236 residues: Class B acid phosphatase (236 aa).

Positions 1 to 23 (MRKLTLTLSALALALSLNSVADA) are cleaved as a signal peptide. Aspartate 68 serves as the catalytic Nucleophile. 2 residues coordinate Mg(2+): aspartate 68 and aspartate 70. The active-site Proton donor is aspartate 70. Residues 136-137 (TG) and lysine 176 contribute to the substrate site. Residue aspartate 191 participates in Mg(2+) binding.

This sequence belongs to the class B bacterial acid phosphatase family. Homotetramer. Mg(2+) is required as a cofactor.

Its subcellular location is the periplasm. It carries out the reaction a phosphate monoester + H2O = an alcohol + phosphate. Activated by ethanol. Also activated by Co(2+), Zn(2+) and glycerol. Inhibited by EDTA, inorganic phosphate, nucleosides and Ca(2+). Unaffected by fluoride and tartrate. Its function is as follows. Dephosphorylates several organic phosphate monoesters including 5'-AMP, 3'-AMP, pNPP, PDP, 5'-UMP, 3'-UMP, G2P, glucose 6-P and ribose 5-P. No activity toward organic phosphate diesters. Also has a phosphotransferase activity catalyzing the transfer of low-energy phosphate groups from organic phosphate monoesters to free hydroxyl groups of various organic compounds. The protein is Class B acid phosphatase (aphA) of Morganella morganii (Proteus morganii).